Here is a 487-residue protein sequence, read N- to C-terminus: Malonate-semialdehyde dehydrogenase 2 (487 aa).

Positions 154, 178, 181, 182, and 231 each coordinate NAD(+). The Nucleophile role is filled by Cys-286. Glu-386 provides a ligand contact to NAD(+).

The protein belongs to the aldehyde dehydrogenase family. IolA subfamily. Homotetramer.

The catalysed reaction is 3-oxopropanoate + NAD(+) + CoA + H2O = hydrogencarbonate + acetyl-CoA + NADH + H(+). The enzyme catalyses 2-methyl-3-oxopropanoate + NAD(+) + CoA + H2O = propanoyl-CoA + hydrogencarbonate + NADH + H(+). It participates in polyol metabolism; myo-inositol degradation into acetyl-CoA; acetyl-CoA from myo-inositol: step 7/7. Functionally, catalyzes the oxidation of malonate semialdehyde (MSA) and methylmalonate semialdehyde (MMSA) into acetyl-CoA and propanoyl-CoA, respectively. Is involved in a myo-inositol catabolic pathway. Bicarbonate, and not CO2, is the end-product of the enzymatic reaction. The polypeptide is Malonate-semialdehyde dehydrogenase 2 (Bacillus thuringiensis subsp. konkukian (strain 97-27)).